A 131-amino-acid polypeptide reads, in one-letter code: MKKNGILNAPLSRVIAELGHTDYIVIADCGLPIPPGVERIDLALKPGLPAFLDTLELVLADMQVERAVFANEISQHNPVIEHAATSMLDGKPIGHVPHAEFKQLSRGARAVIRTGEASPYANVILYSGVIF.

The active-site Proton donor is histidine 20. Residues aspartate 28, histidine 98, and 120 to 122 contribute to the substrate site; that span reads YAN.

The protein belongs to the RbsD / FucU family. RbsD subfamily. Homodecamer.

It localises to the cytoplasm. The enzyme catalyses beta-D-ribopyranose = beta-D-ribofuranose. It participates in carbohydrate metabolism; D-ribose degradation; D-ribose 5-phosphate from beta-D-ribopyranose: step 1/2. Its function is as follows. Catalyzes the interconversion of beta-pyran and beta-furan forms of D-ribose. In Laribacter hongkongensis (strain HLHK9), this protein is D-ribose pyranase.